The chain runs to 322 residues: Quinolinate synthase (322 aa).

Residues His-37 and Ser-54 each contribute to the iminosuccinate site. Cys-99 lines the [4Fe-4S] cluster pocket. Iminosuccinate-binding positions include 125 to 127 (YIN) and Ser-142. Cys-185 is a [4Fe-4S] cluster binding site. Residues 211 to 213 (HPE) and Thr-228 contribute to the iminosuccinate site. Position 278 (Cys-278) interacts with [4Fe-4S] cluster.

This sequence belongs to the quinolinate synthase family. Type 2 subfamily. It depends on [4Fe-4S] cluster as a cofactor.

Its subcellular location is the cytoplasm. The enzyme catalyses iminosuccinate + dihydroxyacetone phosphate = quinolinate + phosphate + 2 H2O + H(+). The protein operates within cofactor biosynthesis; NAD(+) biosynthesis; quinolinate from iminoaspartate: step 1/1. In terms of biological role, catalyzes the condensation of iminoaspartate with dihydroxyacetone phosphate to form quinolinate. The protein is Quinolinate synthase of Prosthecochloris aestuarii (strain DSM 271 / SK 413).